Consider the following 154-residue polypeptide: Large-conductance mechanosensitive channel (154 aa).

The next 3 membrane-spanning stretches (helical) occupy residues V16–V36, D39–I59, and G89–M109.

It belongs to the MscL family. In terms of assembly, homopentamer.

It localises to the cell inner membrane. In terms of biological role, channel that opens in response to stretch forces in the membrane lipid bilayer. May participate in the regulation of osmotic pressure changes within the cell. The polypeptide is Large-conductance mechanosensitive channel (Zymomonas mobilis subsp. mobilis (strain ATCC 31821 / ZM4 / CP4)).